Consider the following 345-residue polypeptide: Isopentenyl-diphosphate delta-isomerase (345 aa).

Residue 6–7 (RK) participates in substrate binding. FMN is bound by residues 63-65 (SMT), Ser93, and Asn122. Substrate is bound at residue 93–95 (SQR). Gln156 lines the substrate pocket. Glu157 serves as a coordination point for Mg(2+). Residues Lys188, Thr218, 265–267 (GLR), and 286–287 (AL) contribute to the FMN site.

It belongs to the IPP isomerase type 2 family. Homooctamer. Dimer of tetramers. FMN serves as cofactor. Requires NADPH as cofactor. Mg(2+) is required as a cofactor.

It localises to the cytoplasm. It carries out the reaction isopentenyl diphosphate = dimethylallyl diphosphate. Involved in the biosynthesis of isoprenoids. Catalyzes the 1,3-allylic rearrangement of the homoallylic substrate isopentenyl (IPP) to its allylic isomer, dimethylallyl diphosphate (DMAPP). This is Isopentenyl-diphosphate delta-isomerase from Archaeoglobus fulgidus (strain ATCC 49558 / DSM 4304 / JCM 9628 / NBRC 100126 / VC-16).